The primary structure comprises 261 residues: Pantothenate synthetase (261 aa).

An ATP-binding site is contributed by methionine 29 to histidine 36. The Proton donor role is filled by histidine 36. Glutamine 60 is a binding site for (R)-pantoate. Position 60 (glutamine 60) interacts with beta-alanine. Glycine 147–aspartate 150 lines the ATP pocket. Glutamine 153 is a binding site for (R)-pantoate. Leucine 184–arginine 187 contacts ATP.

The protein belongs to the pantothenate synthetase family. In terms of assembly, homodimer.

The protein localises to the cytoplasm. The catalysed reaction is (R)-pantoate + beta-alanine + ATP = (R)-pantothenate + AMP + diphosphate + H(+). The protein operates within cofactor biosynthesis; (R)-pantothenate biosynthesis; (R)-pantothenate from (R)-pantoate and beta-alanine: step 1/1. In terms of biological role, catalyzes the condensation of pantoate with beta-alanine in an ATP-dependent reaction via a pantoyl-adenylate intermediate. The protein is Pantothenate synthetase of Francisella philomiragia subsp. philomiragia (strain ATCC 25017 / CCUG 19701 / FSC 153 / O#319-036).